The sequence spans 229 residues: LexA repressor (229 aa).

Positions 28-48 (IREIGEALDIRSTNGVNDHLK) form a DNA-binding region, H-T-H motif. Active-site for autocatalytic cleavage activity residues include Ser-147 and Lys-184.

Belongs to the peptidase S24 family. As to quaternary structure, homodimer.

It carries out the reaction Hydrolysis of Ala-|-Gly bond in repressor LexA.. In terms of biological role, represses a number of genes involved in the response to DNA damage (SOS response), including recA and lexA. In the presence of single-stranded DNA, RecA interacts with LexA causing an autocatalytic cleavage which disrupts the DNA-binding part of LexA, leading to derepression of the SOS regulon and eventually DNA repair. This chain is LexA repressor, found in Anaeromyxobacter dehalogenans (strain 2CP-C).